A 224-amino-acid polypeptide reads, in one-letter code: Cytidylate kinase (224 aa).

11–19 lines the ATP pocket; it reads GPAAAGKST.

It belongs to the cytidylate kinase family. Type 1 subfamily.

It is found in the cytoplasm. The catalysed reaction is CMP + ATP = CDP + ADP. It catalyses the reaction dCMP + ATP = dCDP + ADP. This is Cytidylate kinase (cmk) from Bacillus subtilis (strain 168).